The sequence spans 309 residues: tRNA dimethylallyltransferase (309 aa).

10–17 (GPTASGKT) provides a ligand contact to ATP. Position 12 to 17 (12 to 17 (TASGKT)) interacts with substrate. Interaction with substrate tRNA regions lie at residues 35 to 38 (DSAL) and 240 to 245 (RCVGYR).

It belongs to the IPP transferase family. Monomer. Mg(2+) is required as a cofactor.

The enzyme catalyses adenosine(37) in tRNA + dimethylallyl diphosphate = N(6)-dimethylallyladenosine(37) in tRNA + diphosphate. In terms of biological role, catalyzes the transfer of a dimethylallyl group onto the adenine at position 37 in tRNAs that read codons beginning with uridine, leading to the formation of N6-(dimethylallyl)adenosine (i(6)A). This is tRNA dimethylallyltransferase from Baumannia cicadellinicola subsp. Homalodisca coagulata.